Reading from the N-terminus, the 339-residue chain is Senescence-specific cysteine protease SAG39 (339 aa).

An N-terminal signal peptide occupies residues 1-23 (MAMAKALLFAILGCLCLCSAVLA). 3 disulfide bridges follow: C144/C187, C178/C220, and C276/C328. Residue C147 is part of the active site. Residues H282 and N303 contribute to the active site.

This sequence belongs to the peptidase C1 family. Low expression in mature leaves.

The protein resides in the vacuole. Its function is as follows. Cysteine protease that may have a developmental senescence specific cell death function during apoptosis, heavy metal detoxification, and hypersensitive response. This Oryza sativa subsp. japonica (Rice) protein is Senescence-specific cysteine protease SAG39.